A 201-amino-acid polypeptide reads, in one-letter code: Protein LIGHT-DEPENDENT SHORT HYPOCOTYLS 2 (201 aa).

Residues 1 to 14 show a composition bias toward polar residues; that stretch reads MDLISQNHNNRNPN. Disordered stretches follow at residues 1 to 37 and 151 to 201; these read MDLI…YENQ and SRGV…GATQ. Positions 15–32 are enriched in low complexity; it reads TSLSTQTPSSFSSPPSSS. The ALOG domain occupies 33-160; that stretch reads RYENQKRRDW…SRGVSYEKKR (128 aa). The Nuclear localization signal signature appears at 158–162; that stretch reads KKRKR.

This sequence belongs to the plant homeotic and developmental regulators ALOG protein family.

The protein resides in the nucleus. Probable transcription regulator that acts as a developmental regulator by promoting cell growth in response to light. The chain is Protein LIGHT-DEPENDENT SHORT HYPOCOTYLS 2 (LSH2) from Arabidopsis thaliana (Mouse-ear cress).